Here is a 210-residue protein sequence, read N- to C-terminus: MDNDKHLKGTTTVGIVCTDGVVLATEQRATMGHFIASKTAKKIYQIDDLVGMTTAGSVGDAQQIVRIISVESKLFKMRRQESITIKGITTLLSNMLSGQRYYPLMVQLLIGGVDKNGPAIYSLDALGGNIEETRAVSTGSGSPMAYGVLEDRYTEDMTVVEGVDLAIRALHNAMKRDSASGENIDVVVITKDKYERLDPEAVMKKRELLN.

Residues M1–G9 constitute a propeptide, removed in mature form; by autocatalysis. T10 functions as the Nucleophile in the catalytic mechanism.

Belongs to the peptidase T1B family. The 20S proteasome core is composed of 14 alpha and 14 beta subunits that assemble into four stacked heptameric rings, resulting in a barrel-shaped structure. The two inner rings, each composed of seven catalytic beta subunits, are sandwiched by two outer rings, each composed of seven alpha subunits. The catalytic chamber with the active sites is on the inside of the barrel. Has a gated structure, the ends of the cylinder being occluded by the N-termini of the alpha-subunits. Is capped at one or both ends by the proteasome regulatory ATPase, PAN.

Its subcellular location is the cytoplasm. The catalysed reaction is Cleavage of peptide bonds with very broad specificity.. With respect to regulation, the formation of the proteasomal ATPase PAN-20S proteasome complex, via the docking of the C-termini of PAN into the intersubunit pockets in the alpha-rings, triggers opening of the gate for substrate entry. Interconversion between the open-gate and close-gate conformations leads to a dynamic regulation of the 20S proteasome proteolysis activity. Functionally, component of the proteasome core, a large protease complex with broad specificity involved in protein degradation. This chain is Proteasome subunit beta, found in Methanococcoides burtonii (strain DSM 6242 / NBRC 107633 / OCM 468 / ACE-M).